An 822-amino-acid chain; its full sequence is IQ and AAA domain-containing protein 1-like (822 aa).

The 30-residue stretch at 206–235 (QDQGAIVIQKVWKGYLQRKRIEQDRRMEME) folds into the IQ domain. Residues 338–363 (RQELEAQAQENKKKEQEKNKDKVKEK) are compositionally biased toward basic and acidic residues. 2 disordered regions span residues 338 to 378 (RQEL…KAKK) and 457 to 484 (REET…KDLT). Over residues 464–479 (KSPKKKGGKKSGKKKK) the composition is skewed to basic residues. Position 569–576 (569–576 (GPSGMGKK)) interacts with ATP.

The protein belongs to the AAA ATPase family.

This chain is IQ and AAA domain-containing protein 1-like (Iqca1l), found in Rattus norvegicus (Rat).